A 97-amino-acid polypeptide reads, in one-letter code: Bacterial microcompartment shell protein EutM (97 aa).

Residues 3-87 form the BMC domain; it reads ALGMIETRGL…PHGDLEEVFP (85 aa).

It belongs to the bacterial microcompartments protein family. As to quaternary structure, homohexamer with a central pore of up to 8.6 Angstroms diameter. The hexamers pack into a two-dimensional array. Interacts with EutQ.

The protein resides in the bacterial microcompartment. The protein operates within amine and polyamine degradation; ethanolamine degradation. Probably a major component of the bacterial microcompartment (BMC) shell dedicated to ethanolamine degradation. Each homohexamer has a central pore with an opening of up to 8.6 Angstroms. A positively-charged funnel leads to the pore from each side of the hexamer. The pore probably allows metabolite passage into and out of the BMC. In Escherichia coli O6:H1 (strain CFT073 / ATCC 700928 / UPEC), this protein is Bacterial microcompartment shell protein EutM (eutM).